A 162-amino-acid polypeptide reads, in one-letter code: Protein A49R (162 aa).

The protein belongs to the poxviridae A49 protein family. As to quaternary structure, interacts with host BTRC; this interaction inhibits NF-kappa-B activation.

The protein resides in the host cytoplasm. It is found in the host nucleus. Its function is as follows. Plays a role in the inhibition of host NF-kappa-B activation. Interacts with host BTRC and thereby diminishes ubiquitination of NF-kappa-B inhibitor alpha/NFKBIA. This stabilizes NFKBIA and its interaction with NF-kappaB, so retaining p65/RELA in the cytoplasm and preventing NF-kappa-B-dependent gene expression. The chain is Protein A49R from Bos taurus (Bovine).